Consider the following 218-residue polypeptide: Ropporin-1-like protein (218 aa).

In terms of domain architecture, RIIa spans Pro-17 to Asp-54. A disordered region spans residues Gln-199–Lys-218.

This sequence belongs to the ropporin family. In terms of assembly, component of axonemal radial spoke complexes.

Its subcellular location is the cell projection. It localises to the cilium. The protein resides in the flagellum. In terms of biological role, functions as part of axonemal radial spoke complexes that play an important part in the motility of sperm and cilia. Important for male fertility. Involved in fibrous sheath integrity and sperm motility, plays a role in PKA-dependent signaling processes required for spermatozoa capacitation. This is Ropporin-1-like protein (ropn1l) from Danio rerio (Zebrafish).